The chain runs to 996 residues: UPF0182 protein CE0802 (996 aa).

The next 7 membrane-spanning stretches (helical) occupy residues 19 to 39 (VTWI…TVGF), 63 to 83 (IILF…AGYF), 115 to 135 (ILII…QRSW), 176 to 196 (STLL…LGGI), 212 to 234 (GARA…TYWL), 262 to 282 (KIIL…AIFL), and 290 to 310 (LAVV…PLML). The disordered stretch occupies residues 920–950 (VPDVNATEDADATTDGEDETPAAPAAPAGSE). Residues 925–939 (ATEDADATTDGEDET) are compositionally biased toward acidic residues. Positions 940–950 (PAAPAAPAGSE) are enriched in low complexity.

Belongs to the UPF0182 family.

The protein resides in the cell membrane. This is UPF0182 protein CE0802 from Corynebacterium efficiens (strain DSM 44549 / YS-314 / AJ 12310 / JCM 11189 / NBRC 100395).